A 303-amino-acid polypeptide reads, in one-letter code: Proteasome subunit beta (303 aa).

Residues 1 to 67 (MTWQFPDRLS…SGGTGQLPHG (67 aa)) constitute a propeptide, removed in mature form; by autocatalysis. T68 (nucleophile) is an active-site residue.

This sequence belongs to the peptidase T1B family. The 20S proteasome core is composed of 14 alpha and 14 beta subunits that assemble into four stacked heptameric rings, resulting in a barrel-shaped structure. The two inner rings, each composed of seven catalytic beta subunits, are sandwiched by two outer rings, each composed of seven alpha subunits. The catalytic chamber with the active sites is on the inside of the barrel. Has a gated structure, the ends of the cylinder being occluded by the N-termini of the alpha-subunits. Is capped by the proteasome-associated ATPase, ARC.

It is found in the cytoplasm. It carries out the reaction Cleavage of peptide bonds with very broad specificity.. Its pathway is protein degradation; proteasomal Pup-dependent pathway. Its activity is regulated as follows. The formation of the proteasomal ATPase ARC-20S proteasome complex, likely via the docking of the C-termini of ARC into the intersubunit pockets in the alpha-rings, may trigger opening of the gate for substrate entry. Interconversion between the open-gate and close-gate conformations leads to a dynamic regulation of the 20S proteasome proteolysis activity. Functionally, component of the proteasome core, a large protease complex with broad specificity involved in protein degradation. The polypeptide is Proteasome subunit beta (Mycolicibacterium paratuberculosis (strain ATCC BAA-968 / K-10) (Mycobacterium paratuberculosis)).